Here is a 213-residue protein sequence, read N- to C-terminus: Elongation factor 1-beta (213 aa).

Low complexity predominate over residues 67–80 (AGKAPAASGSAAAA). The disordered stretch occupies residues 67-88 (AGKAPAASGSAAAAAEEEDDED).

Belongs to the EF-1-beta/EF-1-delta family. In terms of assembly, EF-1 is composed of 4 subunits: alpha, beta, delta, and gamma.

EF-1-beta and EF-1-delta stimulate the exchange of GDP bound to EF-1-alpha to GTP. This Candida albicans (strain WO-1) (Yeast) protein is Elongation factor 1-beta (EFB1).